A 647-amino-acid chain; its full sequence is Pollen receptor-like kinase 2 (647 aa).

The first 21 residues, 1–21 (MESKCLMFVSIVSVFFMVVNG), serve as a signal peptide directing secretion. LRR repeat units follow at residues 87–109 (LNSL…EFKK), 110–134 (LVAL…AFDG), 136–159 (GWLK…LVKS), 161–183 (KLIE…RHHP), and 185–203 (MLNL…SFST). A helical transmembrane segment spans residues 248-268 (IVAAAVAALAASLIIIGVVIF). The region spanning 338-613 (KASAEILGSG…EAVEKMEDLM (276 aa)) is the Protein kinase domain. Ser340 is subject to Phosphoserine. ATP contacts are provided by residues 344 to 352 (LGSGCFGAS) and Lys366. Ser418 is modified (phosphoserine). At Thr438 the chain carries Phosphothreonine. Phosphotyrosine is present on Tyr508. The segment at 620-647 (DDDFYSTYASEADGRSSRGLSSEGINLS) is disordered. Residues 637–647 (RGLSSEGINLS) show a composition bias toward polar residues.

Belongs to the protein kinase superfamily. Ser/Thr protein kinase family. Part of a complex containing ROPGEF1 and ARAC11/ROP1. The interaction between PRK2, ROPGEF1 and ARAC11/ROP1 is phosphorylation-independent. Interacts with ROPGEF12 (via C-terminus). Interacts with ROPGEF1 (via PRONE domain). In terms of tissue distribution, expressed in pollen and/or in flowers, but not in leaves. Expressed in pollen tube.

It localises to the cell membrane. The enzyme catalyses L-seryl-[protein] + ATP = O-phospho-L-seryl-[protein] + ADP + H(+). The catalysed reaction is L-threonyl-[protein] + ATP = O-phospho-L-threonyl-[protein] + ADP + H(+). Its activity is regulated as follows. The phosphorylation activity is calcium-independent. Functionally, receptor-like kinase involved in the control of pollen germination and pollen tube polar growth. Phosphorylates ROPGEF1 in its C-terminal region, releasing its auto-inhibition, and thereby activating the ROP1 signaling pathway. May act as a scaffolding protein, recruiting ROPGEF12 to the plasma membrane by binding to its C-terminal domain. Phosphorylates ROPGEF12, releasing its auto-inhibition. In Arabidopsis thaliana (Mouse-ear cress), this protein is Pollen receptor-like kinase 2.